Reading from the N-terminus, the 1381-residue chain is Hepatocyte growth factor receptor (1381 aa).

The signal sequence occupies residues 1 to 24 (MKAPTVLTPGILVLLFILVQRSNG). Residues 25–932 (ECKEALTKSE…VIVQPDQNFT (908 aa)) are Extracellular-facing. The 489-residue stretch at 27–515 (KEALTKSEMN…TGKKITKIPL (489 aa)) folds into the Sema domain. Asparagine 45 carries N-linked (GlcNAc...) asparagine glycosylation. 4 cysteine pairs are disulfide-bonded: cysteine 95-cysteine 101, cysteine 98-cysteine 160, cysteine 133-cysteine 141, and cysteine 172-cysteine 175. An N-linked (GlcNAc...) asparagine glycan is attached at asparagine 106. A glycan (N-linked (GlcNAc...) asparagine) is linked at asparagine 149. The N-linked (GlcNAc...) asparagine glycan is linked to asparagine 202. Cystine bridges form between cysteine 298–cysteine 363 and cysteine 385–cysteine 397. Residue asparagine 399 is glycosylated (N-linked (GlcNAc...) asparagine). 4 disulfide bridges follow: cysteine 520/cysteine 538, cysteine 526/cysteine 561, cysteine 529/cysteine 545, and cysteine 541/cysteine 551. 3 consecutive IPT/TIG domains span residues 563–655 (PTIY…FSYV), 657–739 (PIIT…FSYR), and 742–836 (PIVY…LIYV). O-linked (Man) threonine glycosylation occurs at threonine 582. N-linked (GlcNAc...) asparagine glycosylation is found at asparagine 607 and asparagine 635. O-linked (Man) threonine glycosylation is found at threonine 676 and threonine 761. 3 N-linked (GlcNAc...) asparagine glycosylation sites follow: asparagine 785, asparagine 879, and asparagine 930. Residues 933-955 (GLIAGVVSISIALLLLLGLFLWL) form a helical membrane-spanning segment. The Cytoplasmic portion of the chain corresponds to 956–1381 (KKRKQIKDLG…QDNADGEVDT (426 aa)). Position 966 is a phosphoserine (serine 966). Threonine 977 is subject to Phosphothreonine. Residues serine 990, serine 997, and serine 1000 each carry the phosphoserine modification. Tyrosine 1003 carries the post-translational modification Phosphotyrosine. The region spanning 1078–1345 (VHFNEVIGRG…RISAIFSAFI (268 aa)) is the Protein kinase domain. Residues 1084–1092 (IGRGHFGCV) and lysine 1110 contribute to the ATP site. Catalysis depends on aspartate 1204, which acts as the Proton acceptor. The segment at 1212–1381 (LDEKFTVKVA…QDNADGEVDT (170 aa)) is interaction with RANBP9. At tyrosine 1230 the chain carries Phosphotyrosine. A phosphotyrosine; by autocatalysis mark is found at tyrosine 1234 and tyrosine 1235. Threonine 1289 is subject to Phosphothreonine. Residues 1320 to 1359 (WHPKAEMRPSFSELVSRISAIFSAFIGEHYVHVNATYVNV) form an interaction with MUC20 region. A phosphotyrosine; by autocatalysis mark is found at tyrosine 1349 and tyrosine 1356. Residue tyrosine 1365 is modified to Phosphotyrosine.

The protein belongs to the protein kinase superfamily. Tyr protein kinase family. As to quaternary structure, heterodimer made of an alpha chain (50 kDa) and a beta chain (145 kDa) which are disulfide linked. Binds PLXNB1. Interacts when phosphorylated with downstream effectors including STAT3, PIK3R1, SRC, PCLG1, GRB2 and GAB1. Interacts with SPSB1, SPSB2 and SPSB4. Interacts with INPP5D/SHIP1. When phosphorylated at Tyr-1356, interacts with INPPL1/SHIP2. Interacts with RANBP9 and RANBP10, as well as SPSB1, SPSB2, SPSB3 and SPSB4. SPSB1 binding occurs in the presence and in the absence of HGF, however HGF treatment has a positive effect on this interaction. Interacts with MUC20; prevents interaction with GRB2 and suppresses hepatocyte growth factor-induced cell proliferation. Interacts with GRB10. Interacts with PTPN1 and PTPN2. Interacts with tensin TNS3. Interacts (when phosphorylated) with tensin TNS4 (via SH2 domain); the interaction increases MET protein stability by inhibiting MET endocytosis and subsequent lysosomal degradation. In terms of processing, autophosphorylated in response to ligand binding on Tyr-1234 and Tyr-1235 in the kinase domain leading to further phosphorylation of Tyr-1349 and Tyr-1356 in the C-terminal multifunctional docking site. Dephosphorylated by PTPRJ at Tyr-1349 and Tyr-1365. Dephosphorylated by PTPN1 and PTPN2. Ubiquitinated. Ubiquitination by CBL regulates the receptor stability and activity through proteasomal degradation. Post-translationally, O-mannosylation of IPT/TIG domains by TMEM260 is required for protein maturation. O-mannosylated residues are composed of single mannose glycans that are not elongated or modified.

The protein resides in the membrane. It carries out the reaction L-tyrosyl-[protein] + ATP = O-phospho-L-tyrosyl-[protein] + ADP + H(+). Its activity is regulated as follows. In its inactive state, the C-terminal tail interacts with the catalytic domain and inhibits the kinase activity. Upon ligand binding, the C-terminal tail is displaced and becomes phosphorylated, thus increasing the kinase activity. In terms of biological role, receptor tyrosine kinase that transduces signals from the extracellular matrix into the cytoplasm by binding to hepatocyte growth factor/HGF ligand. Regulates many physiological processes including proliferation, scattering, morphogenesis and survival. Ligand binding at the cell surface induces autophosphorylation of MET on its intracellular domain that provides docking sites for downstream signaling molecules. Following activation by ligand, interacts with the PI3-kinase subunit PIK3R1, PLCG1, SRC, GRB2, STAT3 or the adapter GAB1. Recruitment of these downstream effectors by MET leads to the activation of several signaling cascades including the RAS-ERK, PI3 kinase-AKT, or PLCgamma-PKC. The RAS-ERK activation is associated with the morphogenetic effects while PI3K/AKT coordinates prosurvival effects. During embryonic development, MET signaling plays a role in gastrulation, development and migration of muscles and neuronal precursors, angiogenesis and kidney formation. In adults, participates in wound healing as well as organ regeneration and tissue remodeling. Also promotes differentiation and proliferation of hematopoietic cells. The sequence is that of Hepatocyte growth factor receptor (MET) from Ateles geoffroyi (Black-handed spider monkey).